The following is a 140-amino-acid chain: Ribosome maturation factor RimP (140 aa).

It belongs to the RimP family.

Its subcellular location is the cytoplasm. Required for maturation of 30S ribosomal subunits. In Campylobacter jejuni subsp. jejuni serotype O:2 (strain ATCC 700819 / NCTC 11168), this protein is Ribosome maturation factor RimP.